The following is a 255-amino-acid chain: 1-(5-phosphoribosyl)-5-[(5-phosphoribosylamino)methylideneamino] imidazole-4-carboxamide isomerase (255 aa).

Residue aspartate 8 is the Proton acceptor of the active site. Aspartate 129 serves as the catalytic Proton donor.

It belongs to the HisA/HisF family.

It is found in the cytoplasm. The catalysed reaction is 1-(5-phospho-beta-D-ribosyl)-5-[(5-phospho-beta-D-ribosylamino)methylideneamino]imidazole-4-carboxamide = 5-[(5-phospho-1-deoxy-D-ribulos-1-ylimino)methylamino]-1-(5-phospho-beta-D-ribosyl)imidazole-4-carboxamide. Its pathway is amino-acid biosynthesis; L-histidine biosynthesis; L-histidine from 5-phospho-alpha-D-ribose 1-diphosphate: step 4/9. The polypeptide is 1-(5-phosphoribosyl)-5-[(5-phosphoribosylamino)methylideneamino] imidazole-4-carboxamide isomerase (Parasynechococcus marenigrum (strain WH8102)).